The primary structure comprises 554 residues: Calcium/calmodulin-dependent protein kinase type II delta 2 chain (554 aa).

Positions 13–271 (YQLFEELGKG…AAEAPKHPWI (259 aa)) constitute a Protein kinase domain. Residues 19 to 27 (LGKGAFSVV) and lysine 42 contribute to the ATP site. The Proton acceptor role is filled by aspartate 135. The residue at position 286 (threonine 286) is a Phosphothreonine. A phosphoserine mark is found at serine 314 and serine 318. Disordered stretches follow at residues 324–375 (PDGV…TIED) and 392–413 (WQPS…SSVQ). The segment covering 330–340 (NNKTNLASSPK) has biased composition (polar residues). Threonine 372 carries the phosphothreonine modification.

This sequence belongs to the protein kinase superfamily. CAMK Ser/Thr protein kinase family. CaMK subfamily. In terms of assembly, CAMK2 is composed of four different chains: alpha, beta, gamma, and delta. The different isoforms assemble into homo- or heteromultimeric holoenzymes composed of 8 to 12 subunits. In terms of tissue distribution, first detected at 18 hpf. At 24 hpf, expressed in discrete anterior locations and along either side of the midline. At 48 hpf, expression is predominantly in the forebrain, and then accumulates in the forebrain, hindbrain, and retinal epithelium at 72 hpf.

It catalyses the reaction L-seryl-[protein] + ATP = O-phospho-L-seryl-[protein] + ADP + H(+). The catalysed reaction is L-threonyl-[protein] + ATP = O-phospho-L-threonyl-[protein] + ADP + H(+). Its activity is regulated as follows. Autophosphorylation of CAMK2 plays an important role in the regulation of the kinase activity. In terms of biological role, caM-kinase II (CAMK2) is a prominent kinase in the central nervous system. The sequence is that of Calcium/calmodulin-dependent protein kinase type II delta 2 chain (camk2d2) from Danio rerio (Zebrafish).